A 356-amino-acid polypeptide reads, in one-letter code: MFS-type transporter tazK (356 aa).

9 consecutive transmembrane segments (helical) span residues 12-32 (LPFFLGYVLFVLSQIPVALGH), 42-62 (FLGGVTSSVCPAITGGWLADF), 69-89 (GVAVAIFAATTLVGPSIGAIT), 102-122 (MTAWTTMILGIVSGVAGFIIL), 178-198 (ILLSMTIYISFTFGLIYLLFV), 211-231 (GAIDGTLPLLSICAGIIVGAF), 257-277 (LHPMIVGAVSLAIGLLWFAWT), 288-308 (ILAGIPIGVGVQVILLQSLAY), and 320-340 (AISGTMIVRSLVGGTFPLFAP).

This sequence belongs to the major facilitator superfamily. CAR1 family.

The protein localises to the membrane. Its function is as follows. MFS-type transporter; part of the gene cluster that mediates the biosynthesis of azaterrilone A and other azaphilones, a class of fungal metabolites characterized by a highly oxygenated pyrano-quinone bicyclic core and exhibiting a broad range of bioactivities. This is MFS-type transporter tazK from Aspergillus terreus (strain NIH 2624 / FGSC A1156).